A 239-amino-acid chain; its full sequence is Endonuclease V (239 aa).

Mg(2+) contacts are provided by D50 and D118.

The protein belongs to the endonuclease V family. Requires Mg(2+) as cofactor.

The protein localises to the cytoplasm. It carries out the reaction Endonucleolytic cleavage at apurinic or apyrimidinic sites to products with a 5'-phosphate.. Functionally, DNA repair enzyme involved in the repair of deaminated bases. Selectively cleaves double-stranded DNA at the second phosphodiester bond 3' to a deoxyinosine leaving behind the intact lesion on the nicked DNA. This is Endonuclease V from Xylella fastidiosa (strain Temecula1 / ATCC 700964).